The chain runs to 240 residues: Nicotinamide riboside kinase (240 aa).

13–21 (GCSSSGKTT) is a binding site for ATP. Thr-20 and Asp-39 together coordinate Mg(2+). The Proton acceptor role is filled by Asp-39. Substrate contacts are provided by residues 39–42 (DDFY) and 59–60 (WD). ATP is bound at residue Arg-158. Residues Arg-159 and 164-165 (GY) each bind substrate. Residues 162–164 (RKG) and 208–210 (KSK) contribute to the ATP site.

Belongs to the uridine kinase family. NRK subfamily.

The enzyme catalyses beta-nicotinamide D-riboside + ATP = beta-nicotinamide D-ribonucleotide + ADP + H(+). It carries out the reaction beta-D-ribosylnicotinate + ATP = nicotinate beta-D-ribonucleotide + ADP + H(+). It functions in the pathway cofactor biosynthesis; NAD(+) biosynthesis. In terms of biological role, catalyzes the phosphorylation of nicotinamide riboside (NR) and nicotinic acid riboside (NaR) to form nicotinamide mononucleotide (NMN) and nicotinic acid mononucleotide (NaMN). The chain is Nicotinamide riboside kinase (NRK1) from Saccharomyces cerevisiae (strain ATCC 204508 / S288c) (Baker's yeast).